The chain runs to 716 residues: Eosinophil peroxidase (716 aa).

An N-terminal signal peptide occupies residues 1–18 (MMQQLLALVGALATLILT). Positions 19–140 (QHAEGTAPAS…SGCALQDQAE (122 aa)) are excised as a propeptide. 2 N-linked (GlcNAc...) asparagine glycosylation sites follow: Asn-53 and Asn-114. Cys-142 and Cys-153 form a disulfide bridge. A heme b-binding site is contributed by Asp-233. The active-site Proton acceptor is His-234. Position 235 (Asp-235) interacts with Ca(2+). Cystine bridges form between Cys-254–Cys-264 and Cys-258–Cys-282. The Ca(2+) site is built by Thr-307, Phe-309, Asp-311, and Ser-313. N-linked (GlcNAc...) asparagine glycans are attached at residues Asn-328 and Asn-364. Residues Cys-360 and Cys-371 are joined by a disulfide bond. Residues Glu-381 and His-475 each contribute to the heme b site. At Tyr-489 the chain carries 3'-nitrotyrosine. 2 cysteine pairs are disulfide-bonded: Cys-579-Cys-636 and Cys-677-Cys-702. The N-linked (GlcNAc...) asparagine glycan is linked to Asn-709.

This sequence belongs to the peroxidase family. XPO subfamily. As to quaternary structure, tetramer of two light chains and two heavy chains. Requires Ca(2+) as cofactor. Heme b serves as cofactor.

The protein localises to the cytoplasmic granule. It carries out the reaction 2 a phenolic donor + H2O2 = 2 a phenolic radical donor + 2 H2O. Its function is as follows. Mediates tyrosine nitration of secondary granule proteins in mature resting eosinophils. This is Eosinophil peroxidase (Epx) from Mus musculus (Mouse).